Reading from the N-terminus, the 321-residue chain is Glycolipid transfer protein domain-containing protein 2 (321 aa).

The protein belongs to the GLTP family.

This chain is Glycolipid transfer protein domain-containing protein 2 (Gltpd2), found in Mus musculus (Mouse).